Reading from the N-terminus, the 70-residue chain is Probable tautomerase RSp0893 (70 aa).

P2 serves as the catalytic Proton acceptor; via imino nitrogen.

It belongs to the 4-oxalocrotonate tautomerase family.

This Ralstonia nicotianae (strain ATCC BAA-1114 / GMI1000) (Ralstonia solanacearum) protein is Probable tautomerase RSp0893.